The following is a 521-amino-acid chain: Probable feruloyl esterase B-2 (521 aa).

Positions 1–19 (MKVSLWLTLLGVNLSLALA) are cleaved as a signal peptide. N13, N53, N85, N98, and N138 each carry an N-linked (GlcNAc...) asparagine glycan. Cystine bridges form between C28-C75 and C63-C114. Disulfide bonds link C187–C440, C257–C274, C283–C291, and C506–C520. The active-site Acyl-ester intermediate is the S188. Residue N235 is glycosylated (N-linked (GlcNAc...) asparagine). 5 residues coordinate Ca(2+): D258, D261, V263, D265, and I267. Catalysis depends on D399, which acts as the Charge relay system. N419 is a glycosylation site (N-linked (GlcNAc...) asparagine). The active-site Charge relay system is the H439.

This sequence belongs to the tannase family.

It localises to the secreted. The catalysed reaction is feruloyl-polysaccharide + H2O = ferulate + polysaccharide.. Functionally, involved in degradation of plant cell walls. Hydrolyzes the feruloyl-arabinose ester bond in arabinoxylans as well as the feruloyl-galactose and feruloyl-arabinose ester bonds in pectin. The polypeptide is Probable feruloyl esterase B-2 (faeB-2) (Aspergillus flavus (strain ATCC 200026 / FGSC A1120 / IAM 13836 / NRRL 3357 / JCM 12722 / SRRC 167)).